A 647-amino-acid polypeptide reads, in one-letter code: Dihydrolipoyllysine-residue acetyltransferase component of pyruvate dehydrogenase complex (647 aa).

Residues 1–86 (MWRVCARRAQ…LWGSPSRRWY (86 aa)) constitute a mitochondrion transit peptide. In terms of domain architecture, Lipoyl-binding 1 spans 91–167 (HQKVPLPSLS…PVGAIICITV (77 aa)). At serine 100 the chain carries Phosphoserine. At lysine 132 the chain carries N6-lipoyllysine. Residues 184 to 216 (SAAPAPPAAPAPTPAAPAPSPTPSAQAPGSSYP) form a disordered region. The span at 187 to 205 (PAPPAAPAPTPAAPAPSPT) shows a compositional bias: pro residues. One can recognise a Lipoyl-binding 2 domain in the interval 218–294 (HMQVLLPALS…PLGTPLCIIV (77 aa)). At lysine 259 the chain carries N6-lipoyllysine. The tract at residues 311–352 (VTDLKPPAPPPIPSPAAPVPPAPQPVAPPPSAPRPAAPAGPK) is disordered. A compositionally biased stretch (pro residues) spans 316 to 348 (PPAPPPIPSPAAPVPPAPQPVAPPPSAPRPAAP). Residues 356–393 (FVSPLAKKLAAEKGIDLTQVKGTGPDGRIIKKDIDSFV) form the Peripheral subunit-binding (PSBD) domain. Arginine 461 is a CoA binding site. An N6-acetyllysine modification is found at lysine 466. Lysine 473 is subject to N6-succinyllysine. Serine 475 contacts CoA. Lysine 547 is modified (N6-succinyllysine). CoA-binding residues include serine 566, asparagine 567, and glycine 591. Residues histidine 620 and aspartate 624 contribute to the active site.

It belongs to the 2-oxoacid dehydrogenase family. Part of the pyruvate dehydrogenase complex (PDHc) that is a multi-enzyme complex composed of multiple copies of three enzymes, pyruvate dehydrogenase (subunits PDH1A and PDHB, E1 component), dihydrolipoamide acetyltransferase (DLAT, E2 component), and dihydrolipoamide dehydrogenase (DLD, E3 component) to which is added an additional protein the E3-binding protein (PDHX, E3BP). In terms of structural architecture, the E2 and E3BP components assemble into a 60meric central core with icosahedral symmetry. The central core is decorated with E1 and E3 proteins. Currently, two alternative models for the E2:E3BP stoichiometry are considered as being either 48:12 (E2(48)-E3BP(12)) or 40:20 (E2(40)-E3BP(20)). Interacts with PDK2 and PDK3. Interacts with SIRT4. Interacts with PDHB. The cofactor is (R)-lipoate. Delipoylated at Lys-132 and Lys-259 by SIRT4, delipoylation decreases the PHD complex activity.

The protein resides in the mitochondrion matrix. The catalysed reaction is N(6)-[(R)-dihydrolipoyl]-L-lysyl-[protein] + acetyl-CoA = N(6)-[(R)-S(8)-acetyldihydrolipoyl]-L-lysyl-[protein] + CoA. As part of the pyruvate dehydrogenase complex, catalyzes the transfers of an acetyl group to a lipoic acid moiety. The pyruvate dehydrogenase complex, catalyzes the overall conversion of pyruvate to acetyl-CoA and CO(2), and thereby links cytoplasmic glycolysis and the mitochondrial tricarboxylic acid (TCA) cycle. The chain is Dihydrolipoyllysine-residue acetyltransferase component of pyruvate dehydrogenase complex from Bos taurus (Bovine).